The chain runs to 250 residues: 5-oxoprolinase subunit A (250 aa).

Belongs to the LamB/PxpA family. In terms of assembly, forms a complex composed of PxpA, PxpB and PxpC.

It carries out the reaction 5-oxo-L-proline + ATP + 2 H2O = L-glutamate + ADP + phosphate + H(+). Functionally, catalyzes the cleavage of 5-oxoproline to form L-glutamate coupled to the hydrolysis of ATP to ADP and inorganic phosphate. The chain is 5-oxoprolinase subunit A from Klebsiella pneumoniae (strain 342).